A 431-amino-acid chain; its full sequence is 2-oxoisovalerate dehydrogenase subunit alpha, mitochondrial (431 aa).

Gln140 to Arg142 is a thiamine diphosphate binding site. K(+)-binding residues include Ser189, Thr194, and Gln195.

This sequence belongs to the BCKDHA family. The cofactor is thiamine diphosphate.

The protein resides in the mitochondrion matrix. It carries out the reaction N(6)-[(R)-lipoyl]-L-lysyl-[protein] + 3-methyl-2-oxobutanoate + H(+) = N(6)-[(R)-S(8)-2-methylpropanoyldihydrolipoyl]-L-lysyl-[protein] + CO2. It functions in the pathway lipid metabolism; fatty acid biosynthesis. Functionally, the branched-chain alpha-keto dehydrogenase complex catalyzes the overall conversion of alpha-keto acids to acyl-CoA and CO(2). It contains multiple copies of three enzymatic components: branched-chain alpha-keto acid decarboxylase (E1), lipoamide acyltransferase (E2) and lipoamide dehydrogenase (E3). Required for the production of the monomethyl branched-chain fatty acids (mmBCFAs) isopentadecanoate (C15iso) and isoheptadecanoate (C17iso). This chain is 2-oxoisovalerate dehydrogenase subunit alpha, mitochondrial, found in Caenorhabditis elegans.